The primary structure comprises 155 residues: Small ribosomal subunit protein uS7c (155 aa).

The protein belongs to the universal ribosomal protein uS7 family. As to quaternary structure, part of the 30S ribosomal subunit.

It is found in the plastid. It localises to the chloroplast. Functionally, one of the primary rRNA binding proteins, it binds directly to 16S rRNA where it nucleates assembly of the head domain of the 30S subunit. This chain is Small ribosomal subunit protein uS7c (rps7), found in Stewartia pseudocamellia (Japanese stewartia).